We begin with the raw amino-acid sequence, 509 residues long: Sensor histidine kinase TrcS (509 aa).

2 helical membrane passes run 24-44 (LLLG…VVSV) and 188-208 (VALV…VVGY). The HAMP domain occupies 207-269 (GYALRPLRRV…LLDNVDGALA (63 aa)). The Histidine kinase domain occupies 284-502 (DASHELRTPL…VFRVRLPMIE (219 aa)). Histidine 287 carries the phosphohistidine; by autocatalysis modification.

A divalent metal cation serves as cofactor. Post-translationally, autophosphorylated.

It is found in the cell membrane. The catalysed reaction is ATP + protein L-histidine = ADP + protein N-phospho-L-histidine.. Member of the two-component regulatory system TrcS/TrcR. Phosphorylates TrcR. The TrcR-TrcS regulatory system may act as a transition regulatory system involved in adapting to an intracellular environment and transitioning from latency to reactivation. This Mycobacterium tuberculosis (strain ATCC 25618 / H37Rv) protein is Sensor histidine kinase TrcS.